The following is an 828-amino-acid chain: Periplasmic nitrate reductase (828 aa).

The segment at residues 1–31 is a signal peptide (tat-type signal); the sequence is MKLSRRSFMKANAVAAAAAAAGLSVPGVARA. A 4Fe-4S Mo/W bis-MGD-type domain is found at 39–95; it reads IKWDKAPCRFCGTGCGVLVGTQQGRIVACQGDPDAPVNRGLNCIKGYFLPKIMYGKD. Residues cysteine 46, cysteine 49, cysteine 53, and cysteine 81 each contribute to the [4Fe-4S] cluster site. Mo-bis(molybdopterin guanine dinucleotide) contacts are provided by residues lysine 83, glutamine 150, asparagine 175, cysteine 179, 212-219, 243-247, 262-264, methionine 372, glutamine 376, asparagine 482, 508-509, lysine 531, aspartate 558, and 718-727; these read WGSNMAEM, STFQH, QSD, SD, and TGRVLEHWHT. Residue phenylalanine 794 coordinates substrate. 2 residues coordinate Mo-bis(molybdopterin guanine dinucleotide): asparagine 802 and lysine 819.

The protein belongs to the prokaryotic molybdopterin-containing oxidoreductase family. NasA/NapA/NarB subfamily. Component of the periplasmic nitrate reductase NapAB complex composed of NapA and NapB. It depends on [4Fe-4S] cluster as a cofactor. The cofactor is Mo-bis(molybdopterin guanine dinucleotide). Predicted to be exported by the Tat system. The position of the signal peptide cleavage has not been experimentally proven.

It is found in the periplasm. It catalyses the reaction 2 Fe(II)-[cytochrome] + nitrate + 2 H(+) = 2 Fe(III)-[cytochrome] + nitrite + H2O. In terms of biological role, catalytic subunit of the periplasmic nitrate reductase complex NapAB. Receives electrons from NapB and catalyzes the reduction of nitrate to nitrite. The protein is Periplasmic nitrate reductase of Citrobacter koseri (strain ATCC BAA-895 / CDC 4225-83 / SGSC4696).